The following is a 539-amino-acid chain: Berberine bridge enzyme-like 21 (539 aa).

The N-terminal stretch at 1-26 is a signal peptide; the sequence is MIATQTFVSVFFFVFFLVSLPFFSSA. C41 and C104 are disulfide-bonded. N79 carries N-linked (GlcNAc...) asparagine glycosylation. The FAD-binding PCMH-type domain maps to 82 to 256; it reads STPKPAIIVT…LGYKVKLVPV (175 aa). The 6-(S-cysteinyl)-8alpha-(pros-histidyl)-FAD (His-Cys) cross-link spans 119–181; the sequence is HDYEGLSYIS…KVHGFPAGVC (63 aa). N-linked (GlcNAc...) asparagine glycosylation occurs at N340.

Belongs to the oxygen-dependent FAD-linked oxidoreductase family. Requires FAD as cofactor. The FAD cofactor is bound via a bicovalent 6-S-cysteinyl, 8alpha-N1-histidyl FAD linkage.

The protein resides in the secreted. It localises to the cell wall. This Arabidopsis thaliana (Mouse-ear cress) protein is Berberine bridge enzyme-like 21.